Reading from the N-terminus, the 284-residue chain is D-tagatose-1,6-bisphosphate aldolase subunit GatY (284 aa).

The active-site Proton donor is the aspartate 82. The Zn(2+) site is built by histidine 83 and histidine 180. Glycine 181 is a dihydroxyacetone phosphate binding site. Position 208 (histidine 208) interacts with Zn(2+). Residues 209-211 and 230-233 contribute to the dihydroxyacetone phosphate site; these read GAS and NVAT.

Belongs to the class II fructose-bisphosphate aldolase family. TagBP aldolase GatY subfamily. Forms a complex with GatZ. Zn(2+) is required as a cofactor.

It catalyses the reaction D-tagatofuranose 1,6-bisphosphate = D-glyceraldehyde 3-phosphate + dihydroxyacetone phosphate. The protein operates within carbohydrate metabolism; D-tagatose 6-phosphate degradation; D-glyceraldehyde 3-phosphate and glycerone phosphate from D-tagatose 6-phosphate: step 2/2. Its function is as follows. Catalytic subunit of the tagatose-1,6-bisphosphate aldolase GatYZ, which catalyzes the reversible aldol condensation of dihydroxyacetone phosphate (DHAP or glycerone-phosphate) with glyceraldehyde 3-phosphate (G3P) to produce tagatose 1,6-bisphosphate (TBP). Requires GatZ subunit for full activity and stability. Is involved in the catabolism of galactitol. The protein is D-tagatose-1,6-bisphosphate aldolase subunit GatY of Salmonella enteritidis PT4 (strain P125109).